A 274-amino-acid polypeptide reads, in one-letter code: Methylamine utilization protein MauF (274 aa).

7 helical membrane-spanning segments follow: residues 30 to 50 (WTRA…ALAM), 52 to 72 (AAHV…LSTW), 105 to 125 (LGYA…GGIA), 127 to 147 (LSGF…LAYG), 176 to 196 (WVVG…YVQT), 202 to 222 (VTAA…IAIF), and 253 to 273 (AAIA…MLAL).

The protein localises to the cell membrane. The protein operates within one-carbon metabolism; methylamine degradation. The chain is Methylamine utilization protein MauF (mauF) from Paracoccus versutus (Thiobacillus versutus).